Reading from the N-terminus, the 334-residue chain is Large ribosomal subunit protein uL3 (334 aa).

Positions 1-10 (MGMKKNRPRR) are enriched in basic residues. A disordered region spans residues 1–21 (MGMKKNRPRRGSLAFSPRKRA).

The protein belongs to the universal ribosomal protein uL3 family. As to quaternary structure, part of the 50S ribosomal subunit. Forms a cluster with proteins L14 and L24e.

One of the primary rRNA binding proteins, it binds directly near the 3'-end of the 23S rRNA, where it nucleates assembly of the 50S subunit. This chain is Large ribosomal subunit protein uL3, found in Methanococcus maripaludis (strain C5 / ATCC BAA-1333).